The sequence spans 344 residues: Unsaturated rhamnogalacturonyl hydrolase YesR (344 aa).

Substrate is bound by residues 30-31 (DW), Asn-74, and 118-128 (QHTVNAAEYVF). Asp-135 serves as the catalytic Proton donor. Residues 198 to 202 (RANGW) and 308 to 309 (NA) contribute to the substrate site.

This sequence belongs to the glycosyl hydrolase 105 family. In terms of assembly, monomer.

Its subcellular location is the cytoplasm. It carries out the reaction 2-O-(4-deoxy-beta-L-threo-hex-4-enopyranuronosyl)-alpha-L-rhamnose + H2O = 5-dehydro-4-deoxy-D-glucuronate + L-rhamnopyranose. In terms of biological role, catalyzes the hydrolysis of unsaturated rhamnogalacturonan disaccharide to yield unsaturated D-galacturonic acid and L-rhamnose. It cannot act on unsaturated glucuronyl hydrolase (UGL) substrates containing unsaturated D-glucuronic acid at the non-reducing terminus, although the active pockets of YesR and UGL are very similar. The polypeptide is Unsaturated rhamnogalacturonyl hydrolase YesR (yesR) (Bacillus subtilis (strain 168)).